The sequence spans 505 residues: Peroxisome proliferator-activated receptor gamma (505 aa).

Thr84 is a glycosylation site (O-linked (GlcNAc) threonine). Ser112 carries the post-translational modification Phosphoserine; by MAPK. A DNA-binding region (nuclear receptor) is located at residues 136 to 210 (AIECRVCGDK…VGMSHNAIRF (75 aa)). 2 NR C4-type zinc fingers span residues 139–159 (CRVC…CEGC) and 176–198 (CDLN…FQKC). The tract at residues 205–280 (HNAIRFGRMP…DKSPFVIYDM (76 aa)) is interaction with FAM120B. The region spanning 238-503 (DLRALAKHLY…HPLLQEIYKD (266 aa)) is the NR LBD domain. Residue Lys252 forms a Glycyl lysine isopeptide (Lys-Gly) (interchain with G-Cter in ubiquitin) linkage. A 9aaTAD motif is present at residues 495–503 (PLLQEIYKD).

This sequence belongs to the nuclear hormone receptor family. NR1 subfamily. Interacts with FOXO1 (acetylated form). Heterodimer with other nuclear receptors, such as RXRA. The heterodimer with the retinoic acid receptor RXRA is called adipocyte-specific transcription factor ARF6. Interacts with NCOA6 coactivator, leading to a strong increase in transcription of target genes. Interacts with coactivator PPARBP, leading to a mild increase in transcription of target genes. Interacts with NOCA7 in a ligand-inducible manner. Interacts with NCOA1 and NCOA2 LXXLL motifs. Interacts with ASXL1, ASXL2, DNTTIP2, FAM120B, MAP2K1/MEK1, NR0B2, PDPK1, PRDM16, PRMT2 and TGFB1I1. Interacts (when activated by agonist) with PPP5C. Interacts with HELZ2 and THRAP3; the interaction stimulates the transcriptional activity of PPARG. Interacts with PER2, the interaction is ligand dependent and blocks PPARG recruitment to target promoters. Interacts with NOCT. Interacts with ACTN4. Interacts (when in the liganded conformation) with GPS2. Interacts with CRY1 and CRY2 in a ligand-dependent manner. In the absence of hormonal ligand, interacts with TACC1. In macrophages, interacts with PAQR3 and STUB1; the interactions promote PPARG poylubiquitination and STUB1-mediated degradation. Phosphorylated by MAPK. The phosphorylation inhibits PPAR gamma activity. In terms of processing, O-GlcNAcylation at Thr-84 reduces transcriptional activity in adipocytes. Post-translationally, phosphorylated at basal conditions and dephosphorylated when treated with the ligand. May be dephosphorylated by PPP5C. The phosphorylated form may be inactive and dephosphorylation at induces adipogenic activity. Ubiquitinated by E3 ubiquitin-protein ligase complex containing FBXO9; leading to proteasomal degradation. Ubiquitinated at Lys-252 by TRIM55 leading to proteasomal degradation. Ubiquitinated by E3 ubiquitin-protein ligase STUB1/CHIP; leading to proteasomal degradation. As to expression, highest expression in adipose tissue.

It is found in the nucleus. It localises to the cytoplasm. Its activity is regulated as follows. PDPK1 activates its transcriptional activity independently of its kinase activity. Functionally, nuclear receptor that binds peroxisome proliferators such as hypolipidemic drugs and fatty acids. Once activated by a ligand, the nuclear receptor binds to DNA specific PPAR response elements (PPRE) and modulates the transcription of its target genes, such as acyl-CoA oxidase. It therefore controls the peroxisomal beta-oxidation pathway of fatty acids. Key regulator of adipocyte differentiation and glucose homeostasis. ARF6 acts as a key regulator of the tissue-specific adipocyte P2 (aP2) enhancer. Acts as a critical regulator of gut homeostasis by suppressing NF-kappa-B-mediated pro-inflammatory responses. Plays a role in the regulation of cardiovascular circadian rhythms by regulating the transcription of BMAL1 in the blood vessels. This Rattus norvegicus (Rat) protein is Peroxisome proliferator-activated receptor gamma (Pparg).